The primary structure comprises 508 residues: Cytochrome c-552 (508 aa).

Residues 1-23 form the signal peptide; it reads MNKSYKILLTGSVIAIGAMGLMA. Histidine 103 serves as a coordination point for heme c. Positions 131, 134, and 135 each coordinate heme. Cysteine 169, cysteine 172, histidine 173, cysteine 211, cysteine 214, and histidine 215 together coordinate heme c. Glutamate 217, tyrosine 218, lysine 274, and glutamine 276 together coordinate Ca(2+). Tyrosine 218 contacts substrate. Residue histidine 277 coordinates substrate. Positions 288, 295, 298, 299, 313, 326, 329, 330, and 405 each coordinate heme c. The disordered stretch occupies residues 485-508; sequence GRLDPKTLEGMSNKSSWSQTELSQ. Residues 494–508 show a composition bias toward polar residues; that stretch reads GMSNKSSWSQTELSQ.

It belongs to the cytochrome c-552 family. Ca(2+) serves as cofactor. Requires heme c as cofactor.

It localises to the periplasm. The catalysed reaction is 6 Fe(III)-[cytochrome c] + NH4(+) + 2 H2O = 6 Fe(II)-[cytochrome c] + nitrite + 8 H(+). Its pathway is nitrogen metabolism; nitrate reduction (assimilation). In terms of biological role, catalyzes the reduction of nitrite to ammonia, consuming six electrons in the process. The polypeptide is Cytochrome c-552 (Desulfotalea psychrophila (strain LSv54 / DSM 12343)).